We begin with the raw amino-acid sequence, 693 residues long: Elongation factor G (693 aa).

The 276-residue stretch at 8 to 283 folds into the tr-type G domain; it reads NKVRNFGIAA…AVCDYLPSPL (276 aa). GTP-binding positions include 17-24, 81-85, and 135-138; these read AHIDAGKT, DTPGH, and NKMD.

Belongs to the TRAFAC class translation factor GTPase superfamily. Classic translation factor GTPase family. EF-G/EF-2 subfamily.

The protein resides in the cytoplasm. In terms of biological role, catalyzes the GTP-dependent ribosomal translocation step during translation elongation. During this step, the ribosome changes from the pre-translocational (PRE) to the post-translocational (POST) state as the newly formed A-site-bound peptidyl-tRNA and P-site-bound deacylated tRNA move to the P and E sites, respectively. Catalyzes the coordinated movement of the two tRNA molecules, the mRNA and conformational changes in the ribosome. This is Elongation factor G from Endomicrobium trichonymphae.